The sequence spans 440 residues: WAS/WASL-interacting protein family member 2 (440 aa).

Pro residues predominate over residues 1-18 (MPIPPPPPPPPGPPPPPT). Residues 1–38 (MPIPPPPPPPPGPPPPPTFNQANTEQPKLSRDEQRNRG) are disordered. A WH2 domain is found at 36–53 (NRGALLQDICKGTKLKKV). Arg37 is modified (asymmetric dimethylarginine). Residues 49–52 (KLKK) are binds actin. Disordered stretches follow at residues 56–386 (VNDR…RDSI) and 419–440 (RVYPSKTNRAARGAPPLPPILR). Residues 116–132 (PSSRAAAPRPPGSAASG) are compositionally biased toward low complexity. Pro residues-rich tracts occupy residues 176–193 (APPPPPPGRRANAPPTPL), 225–236 (PAPPPVKPPPSP), 249–262 (APPPPPYRQPPGVP), and 356–378 (RGKPPPPPSRTPAGPPPPPPPPL).

The protein belongs to the verprolin family. In terms of assembly, interacts with WASL and WASP, and this interaction results in cytoplasmic relocation of these two proteins along actin filaments. Interacts with NCK2 resulting in the localization to sites of focal adhesions.

It localises to the cytoplasm. The protein localises to the cytoskeleton. Its function is as follows. Plays an active role in the formation of cell surface protrusions downstream of activated PDGFB receptors. Plays an important role in actin-microspike formation through cooperation with WASL. May cooperate with WASP and WASL to induce mobilization and reorganization of the actin filament system. The sequence is that of WAS/WASL-interacting protein family member 2 (Wipf2) from Mus musculus (Mouse).